The primary structure comprises 919 residues: Phosphoenolpyruvate carboxylase (919 aa).

Active-site residues include His138 and Lys579.

Belongs to the PEPCase type 1 family. Mg(2+) serves as cofactor.

The catalysed reaction is oxaloacetate + phosphate = phosphoenolpyruvate + hydrogencarbonate. Functionally, forms oxaloacetate, a four-carbon dicarboxylic acid source for the tricarboxylic acid cycle. This is Phosphoenolpyruvate carboxylase from Corynebacterium glutamicum (Brevibacterium saccharolyticum).